The sequence spans 400 residues: Methylthioribose kinase (400 aa).

ATP-binding positions include N40, K57, and 111–113 (EDL). D229 is a binding site for substrate. Residue 246 to 248 (DAE) coordinates ATP. R344 provides a ligand contact to substrate.

It belongs to the methylthioribose kinase family. As to quaternary structure, homodimer.

The catalysed reaction is 5-(methylsulfanyl)-D-ribose + ATP = 5-(methylsulfanyl)-alpha-D-ribose 1-phosphate + ADP + H(+). It participates in amino-acid biosynthesis; L-methionine biosynthesis via salvage pathway; S-methyl-5-thio-alpha-D-ribose 1-phosphate from S-methyl-5'-thioadenosine (hydrolase route): step 2/2. In terms of biological role, catalyzes the phosphorylation of methylthioribose into methylthioribose-1-phosphate. The polypeptide is Methylthioribose kinase (Pectobacterium carotovorum subsp. carotovorum (strain PC1)).